We begin with the raw amino-acid sequence, 334 residues long: UDP-glucose 4-epimerase (334 aa).

Residues 11 to 12, 31 to 36, 50 to 51, 72 to 76, Asn-91, Thr-116, Tyr-140, Lys-144, and Phe-168 each bind NAD(+); these read YI, DNLQKG, DI, and FAANS. Substrate contacts are provided by Thr-116 and Tyr-140. The Proton acceptor role is filled by Tyr-140. Substrate-binding positions include Asn-169, 188–189, 205–207, Arg-220, and 281–284; these read HL, AIF, and RSGD.

It belongs to the NAD(P)-dependent epimerase/dehydratase family. In terms of assembly, homodimer. Requires NAD(+) as cofactor.

It carries out the reaction UDP-alpha-D-glucose = UDP-alpha-D-galactose. It functions in the pathway carbohydrate metabolism; galactose metabolism. Functionally, involved in the metabolism of galactose. Catalyzes the conversion of UDP-galactose (UDP-Gal) to UDP-glucose (UDP-Glc) through a mechanism involving the transient reduction of NAD. The chain is UDP-glucose 4-epimerase (galE) from Halalkalibacterium halodurans (strain ATCC BAA-125 / DSM 18197 / FERM 7344 / JCM 9153 / C-125) (Bacillus halodurans).